A 135-amino-acid polypeptide reads, in one-letter code: Global transcriptional regulator Spx 2 (135 aa).

The active site involves Cys-10.

It belongs to the ArsC family. Spx subfamily. Interacts with the C-terminal domain of the alpha subunit of the RNAP.

The protein localises to the cytoplasm. Functionally, global transcriptional regulator that plays a key role in stress response and exerts either positive or negative regulation of genes. Acts by interacting with the C-terminal domain of the alpha subunit of the RNA polymerase (RNAP). This interaction can enhance binding of RNAP to the promoter region of target genes and stimulate their transcription, or block interaction of RNAP with activator. This Oceanobacillus iheyensis (strain DSM 14371 / CIP 107618 / JCM 11309 / KCTC 3954 / HTE831) protein is Global transcriptional regulator Spx 2.